Consider the following 224-residue polypeptide: UPF0758 protein BPUM_2444 (224 aa).

One can recognise an MPN domain in the interval 102–224; sequence VIRTPEDGAN…FVSLKEKGYL (123 aa). Positions 173, 175, and 186 each coordinate Zn(2+). The JAMM motif signature appears at 173 to 186; the sequence is HNHPSGDPTPSRED.

This sequence belongs to the UPF0758 family.

The protein is UPF0758 protein BPUM_2444 of Bacillus pumilus (strain SAFR-032).